A 232-amino-acid chain; its full sequence is Large ribosomal subunit protein uL1 (232 aa).

This sequence belongs to the universal ribosomal protein uL1 family. Part of the 50S ribosomal subunit.

Binds directly to 23S rRNA. The L1 stalk is quite mobile in the ribosome, and is involved in E site tRNA release. In terms of biological role, protein L1 is also a translational repressor protein, it controls the translation of the L11 operon by binding to its mRNA. This chain is Large ribosomal subunit protein uL1, found in Syntrophus aciditrophicus (strain SB).